The primary structure comprises 385 residues: tRNA 2-selenouridine synthase (385 aa).

The Rhodanese domain maps to 15–138 (FIADTPLIDV…ARQFLISTID (124 aa)). The active-site S-selanylcysteine intermediate is C98.

It belongs to the SelU family. Monomer.

It catalyses the reaction 5-methylaminomethyl-2-thiouridine(34) in tRNA + selenophosphate + (2E)-geranyl diphosphate + H2O + H(+) = 5-methylaminomethyl-2-selenouridine(34) in tRNA + (2E)-thiogeraniol + phosphate + diphosphate. It carries out the reaction 5-methylaminomethyl-2-thiouridine(34) in tRNA + (2E)-geranyl diphosphate = 5-methylaminomethyl-S-(2E)-geranyl-thiouridine(34) in tRNA + diphosphate. The catalysed reaction is 5-methylaminomethyl-S-(2E)-geranyl-thiouridine(34) in tRNA + selenophosphate + H(+) = 5-methylaminomethyl-2-(Se-phospho)selenouridine(34) in tRNA + (2E)-thiogeraniol. The enzyme catalyses 5-methylaminomethyl-2-(Se-phospho)selenouridine(34) in tRNA + H2O = 5-methylaminomethyl-2-selenouridine(34) in tRNA + phosphate. Its function is as follows. Involved in the post-transcriptional modification of the uridine at the wobble position (U34) of tRNA(Lys), tRNA(Glu) and tRNA(Gln). Catalyzes the conversion of 2-thiouridine (S2U-RNA) to 2-selenouridine (Se2U-RNA). Acts in a two-step process involving geranylation of 2-thiouridine (S2U) to S-geranyl-2-thiouridine (geS2U) and subsequent selenation of the latter derivative to 2-selenouridine (Se2U) in the tRNA chain. The protein is tRNA 2-selenouridine synthase of Nitrosomonas europaea (strain ATCC 19718 / CIP 103999 / KCTC 2705 / NBRC 14298).